We begin with the raw amino-acid sequence, 245 residues long: Carbohydrate deacetylase (245 aa).

Mg(2+) contacts are provided by H59 and H121.

Belongs to the YdjC deacetylase family. As to quaternary structure, homodimer. It depends on Mg(2+) as a cofactor.

Probably catalyzes the deacetylation of acetylated carbohydrates an important step in the degradation of oligosaccharides. The protein is Carbohydrate deacetylase of Clostridium beijerinckii (strain ATCC 51743 / NCIMB 8052) (Clostridium acetobutylicum).